A 666-amino-acid polypeptide reads, in one-letter code: ATP-dependent zinc metalloprotease FtsH (666 aa).

The Cytoplasmic segment spans residues 1-6; the sequence is MKSETG. The helical transmembrane segment at 7-27 threads the bilayer; the sequence is YMGFVVVLVFMVLLALQLATL. At 28–116 the chain is on the periplasmic side; that stretch reads SAPATQIAYS…TRYRGADDDT (89 aa). A helical transmembrane segment spans residues 117-137; that stretch reads WIGTLASWIVPIAVFALVWNL. Residues 138–666 lie on the Cytoplasmic side of the membrane; the sequence is MLRRPRGGLQ…ADNADHSVPQ (529 aa). ATP is bound at residue 210–217; it reads GAPGTGKT. Histidine 432 lines the Zn(2+) pocket. The active site involves glutamate 433. Zn(2+)-binding residues include histidine 436 and aspartate 509. A disordered region spans residues 612–666; that stretch reads NDEPTPEPGARDPGGDAAKRSGIGAAPAKPPAEVGSAELRDPARKADNADHSVPQ. Basic and acidic residues-rich tracts occupy residues 620–630 and 649–666; these read GARDPGGDAAK and ELRD…SVPQ.

The protein in the central section; belongs to the AAA ATPase family. It in the C-terminal section; belongs to the peptidase M41 family. As to quaternary structure, homohexamer. It depends on Zn(2+) as a cofactor.

The protein localises to the cell inner membrane. In terms of biological role, acts as a processive, ATP-dependent zinc metallopeptidase for both cytoplasmic and membrane proteins. Plays a role in the quality control of integral membrane proteins. The sequence is that of ATP-dependent zinc metalloprotease FtsH from Burkholderia pseudomallei (strain 1710b).